Here is a 281-residue protein sequence, read N- to C-terminus: Aquaporin-9 (281 aa).

Residues 1 to 17 are Cytoplasmic-facing; sequence MGAFVNTKVYIENKNIR. Residues 18–36 traverse the membrane as a helical segment; the sequence is DWLSEALSMFMYMSLLLGS. The Extracellular portion of the chain corresponds to 37–50; that stretch reads AATGHFSGREDDAL. The helical transmembrane segment at 51 to 69 threads the bilayer; that stretch reads FGVIFQGFSITFGIYIGGA. At 70–71 the chain is on the cytoplasmic side; the sequence is MS. Positions 72-84 form an intramembrane region, discontinuously helical; sequence GAIINPALTLAVA. An NPA 1 motif is present at residues 76-78; that stretch reads NPA. At 85-90 the chain is on the cytoplasmic side; it reads LLGKIS. Residues 91–115 form a helical membrane-spanning segment; sequence WRKCIVLQSAQYIGSFIASAVVYLI. Topologically, residues 116-157 are extracellular; sequence YNDSLDAFGAGANFTATEPGVFRKDVAGIWSTFPKTYLKERG. N-linked (GlcNAc...) asparagine glycans are attached at residues Asn117 and Asn128. Residues 158-175 form a helical membrane-spanning segment; the sequence is AIFNQIFCSMLLTFGFLA. The Cytoplasmic segment spans residues 176–187; it reads ISDYKNFRPSKG. A helical transmembrane segment spans residues 188–204; that stretch reads LFPIAVGLLVMTVFLAF. Residues 205–207 lie on the Extracellular side of the membrane; it reads SYS. The segment at residues 208–222 is an intramembrane region (discontinuously helical); sequence TGAAMNPARDFSPRL. The NPA 2 signature appears at 213 to 215; it reads NPA. Residues 223–241 are Extracellular-facing; sequence WSLIIGYGIEVFSYNQYEW. Residues 242–262 form a helical membrane-spanning segment; sequence FWIPWLMPYVGAMLGALIYQL. Over 263–281 the chain is Cytoplasmic; it reads LIGAQWSKGQKGESKHKDP.

Belongs to the MIP/aquaporin (TC 1.A.8) family.

The protein resides in the cell membrane. It carries out the reaction H2O(in) = H2O(out). Its function is as follows. Aquaglyceroporin that may modulate the water content and osmolytes during anhydrobiosis. The protein is Aquaporin-9 of Milnesium tardigradum (Water bear).